An 80-amino-acid polypeptide reads, in one-letter code: Small ribosomal subunit protein bS18 (80 aa).

Belongs to the bacterial ribosomal protein bS18 family. As to quaternary structure, part of the 30S ribosomal subunit. Forms a tight heterodimer with protein bS6.

Functionally, binds as a heterodimer with protein bS6 to the central domain of the 16S rRNA, where it helps stabilize the platform of the 30S subunit. This is Small ribosomal subunit protein bS18 from Staphylococcus aureus (strain Mu3 / ATCC 700698).